Reading from the N-terminus, the 137-residue chain is Small ribosomal subunit protein uS12 (137 aa).

The interval M1–K57 is disordered. D102 is modified (3-methylthioaspartic acid).

Belongs to the universal ribosomal protein uS12 family. Part of the 30S ribosomal subunit. Contacts proteins S8 and S17. May interact with IF1 in the 30S initiation complex.

Its function is as follows. With S4 and S5 plays an important role in translational accuracy. In terms of biological role, interacts with and stabilizes bases of the 16S rRNA that are involved in tRNA selection in the A site and with the mRNA backbone. Located at the interface of the 30S and 50S subunits, it traverses the body of the 30S subunit contacting proteins on the other side and probably holding the rRNA structure together. The combined cluster of proteins S8, S12 and S17 appears to hold together the shoulder and platform of the 30S subunit. The protein is Small ribosomal subunit protein uS12 of Lactococcus lactis subsp. lactis (strain IL1403) (Streptococcus lactis).